The following is a 393-amino-acid chain: MRLLKTHPILGLANSYLIDSPQPSNISYMWNFGSLLGVCLIIQILTGVFLAMHYTPSVDLAFISVEHIMRDVNYGWLIRYLHANTASFFFIFVYLHIGRGLYYGSYKSPRTLLWSIGVIILVLMMAIAFLGYVLPYGQMSLWGATVITNLLSAIPWIGQDFVEFVWGGFSVNNATLNRFFSLHYLLPFVLAALAAMHLLALHEHGSSNPLGVSGNTDRLPFHPYFTFKDLVTIFVFLLALSLFVFYMPNAMGHSDNYIPANPMQTPASIVPEWYLLPFYAILRSIPSKLIGVLAMFMSLLILLGMPILDTSRIRGSQFRPLMRFSFWTFVACFFILMFIGSQHVESPYVEIGAAATAYYFAWFLVVVPAIGIIENTLMDIALTEETSSFHRVV.

4 helical membrane-spanning segments follow: residues 32–52, 76–98, 113–133, and 179–199; these read FGSL…FLAM, WLIR…LHIG, LWSI…LGYV, and FFSL…MHLL. Positions 82 and 96 each coordinate heme b. Heme b is bound by residues His183 and His197. An a ubiquinone-binding site is contributed by His202. The next 4 helical transmembrane spans lie at 225–245, 289–309, 321–341, and 348–368; these read FTFK…LFVF, LIGV…PILD, LMRF…FIGS, and YVEI…VVVP.

This sequence belongs to the cytochrome b family. In terms of assembly, fungal cytochrome b-c1 complex contains 10 subunits; 3 respiratory subunits, 2 core proteins and 5 low-molecular weight proteins. Cytochrome b-c1 complex is a homodimer. Requires heme b as cofactor.

Its subcellular location is the mitochondrion inner membrane. In terms of biological role, component of the ubiquinol-cytochrome c reductase complex (complex III or cytochrome b-c1 complex) that is part of the mitochondrial respiratory chain. The b-c1 complex mediates electron transfer from ubiquinol to cytochrome c. Contributes to the generation of a proton gradient across the mitochondrial membrane that is then used for ATP synthesis. The sequence is that of Cytochrome b (COB) from Mycosarcoma maydis (Corn smut fungus).